A 103-amino-acid chain; its full sequence is UPF0145 protein BT9727_3206 (103 aa).

Belongs to the UPF0145 family.

This chain is UPF0145 protein BT9727_3206, found in Bacillus thuringiensis subsp. konkukian (strain 97-27).